Consider the following 783-residue polypeptide: Endonuclease MutS2 (783 aa).

328-335 (GPNTGGKT) lines the ATP pocket. One can recognise a Smr domain in the interval 708 to 783 (LDLRGKRYEE…GSGCTIATLG (76 aa)).

It belongs to the DNA mismatch repair MutS family. MutS2 subfamily. In terms of assembly, homodimer. Binds to stalled ribosomes, contacting rRNA.

Endonuclease that is involved in the suppression of homologous recombination and thus may have a key role in the control of bacterial genetic diversity. Functionally, acts as a ribosome collision sensor, splitting the ribosome into its 2 subunits. Detects stalled/collided 70S ribosomes which it binds and splits by an ATP-hydrolysis driven conformational change. Acts upstream of the ribosome quality control system (RQC), a ribosome-associated complex that mediates the extraction of incompletely synthesized nascent chains from stalled ribosomes and their subsequent degradation. Probably generates substrates for RQC. This Streptococcus thermophilus (strain CNRZ 1066) protein is Endonuclease MutS2.